The following is a 401-amino-acid chain: tRNA N6-adenosine threonylcarbamoyltransferase (401 aa).

Positions 111 and 115 each coordinate Fe cation. Substrate is bound by residues 191-195 (LASGG), D223, G236, and N336. A Fe cation-binding site is contributed by D364.

This sequence belongs to the KAE1 / TsaD family. It depends on Fe(2+) as a cofactor.

The protein resides in the cytoplasm. It catalyses the reaction L-threonylcarbamoyladenylate + adenosine(37) in tRNA = N(6)-L-threonylcarbamoyladenosine(37) in tRNA + AMP + H(+). In terms of biological role, required for the formation of a threonylcarbamoyl group on adenosine at position 37 (t(6)A37) in tRNAs that read codons beginning with adenine. Is involved in the transfer of the threonylcarbamoyl moiety of threonylcarbamoyl-AMP (TC-AMP) to the N6 group of A37, together with TsaE and TsaB. TsaD likely plays a direct catalytic role in this reaction. This Tropheryma whipplei (strain TW08/27) (Whipple's bacillus) protein is tRNA N6-adenosine threonylcarbamoyltransferase.